Reading from the N-terminus, the 321-residue chain is Glucokinase (321 aa).

Position 8–13 (8–13) interacts with ATP; sequence GDVGGT.

This sequence belongs to the bacterial glucokinase family.

The protein localises to the cytoplasm. The enzyme catalyses D-glucose + ATP = D-glucose 6-phosphate + ADP + H(+). This Shigella flexneri serotype 5b (strain 8401) protein is Glucokinase.